Consider the following 160-residue polypeptide: Complexin-4 (160 aa).

Positions 14–44 (KNLGFGGGSEEKKEEGGTSDPAAAKGMTREE) are disordered. Cys157 is subject to Cysteine methyl ester. The S-farnesyl cysteine moiety is linked to residue Cys157. A propeptide spans 158–160 (SVM) (removed in mature form).

It belongs to the complexin/synaphin family. As to quaternary structure, weakly binds to the SNARE core complex containing SNAP25, VAMP2 and STX1A. Post-translationally, farnesylation mediates presynaptic targeting and is important for function in neurotransmitter release. As to expression, present specifically in the retina (at protein level). Expressed in the outer nuclear layer of the retina (at protein level). Strongly expressed at rod photoreceptor ribbon synapses (at protein level). Not expressed at conventional amacrine cell synapses, nor at cone photoreceptor ribbon synapses (at protein level). Weakly expressed at cone photoreceptor synaptic terminals (at protein level). Not expressed in the brain (at protein level).

The protein resides in the synapse. It is found in the cell membrane. Its function is as follows. Complexin that regulates SNARE protein complex-mediated synaptic vesicle fusion. Required for the maintenance of synaptic ultrastructure in the adult retina. Positively regulates synaptic transmission through synaptic vesicle availability and exocytosis of neurotransmitters at photoreceptor ribbon synapses in the retina. Suppresses tonic photoreceptor activity and baseline 'noise' by suppression of Ca(2+) vesicle tonic release and the facilitation of evoked synchronous and asynchronous Ca(2+) vesicle release. In Mus musculus (Mouse), this protein is Complexin-4 (Cplx4).